A 765-amino-acid chain; its full sequence is Protein transport protein Sec23A (765 aa).

Cys-61, Cys-66, Cys-85, and Cys-88 together coordinate Zn(2+). Residues 632-718 (PEPVLLDSSS…EHGGSQARFL (87 aa)) form a Gelsolin-like repeat.

The protein belongs to the SEC23/SEC24 family. SEC23 subfamily. COPII is composed of at least five proteins: the Sec23/24 complex, the Sec13/31 complex and Sar1.

It localises to the cytoplasmic vesicle. It is found in the COPII-coated vesicle membrane. The protein localises to the endoplasmic reticulum membrane. Its subcellular location is the cytoplasm. The protein resides in the cytosol. Its function is as follows. Component of the coat protein complex II (COPII) which promotes the formation of transport vesicles from the endoplasmic reticulum (ER). The coat has two main functions, the physical deformation of the endoplasmic reticulum membrane into vesicles and the selection of cargo molecules for their transport to the Golgi complex. The protein is Protein transport protein Sec23A of Xenopus tropicalis (Western clawed frog).